Here is a 212-residue protein sequence, read N- to C-terminus: Probable chemoreceptor glutamine deamidase CheD (212 aa).

The protein belongs to the CheD family.

It carries out the reaction L-glutaminyl-[protein] + H2O = L-glutamyl-[protein] + NH4(+). Its function is as follows. Probably deamidates glutamine residues to glutamate on methyl-accepting chemotaxis receptors (MCPs), playing an important role in chemotaxis. In Oleidesulfovibrio alaskensis (strain ATCC BAA-1058 / DSM 17464 / G20) (Desulfovibrio alaskensis), this protein is Probable chemoreceptor glutamine deamidase CheD.